Consider the following 622-residue polypeptide: Neuronal acetylcholine receptor subunit alpha-4 (622 aa).

A signal peptide spans Met-1–Gly-23. The Extracellular segment spans residues His-24–Leu-237. Asn-52 carries N-linked (GlcNAc...) asparagine glycosylation. Positions 71 and 73 each coordinate Ca(2+). N-linked (GlcNAc...) asparagine glycosylation is present at Asn-102. 2 disulfide bridges follow: Cys-156-Cys-170 and Cys-220-Cys-221. A helical transmembrane segment spans residues Pro-238–Leu-262. Cys-266 is lipidated: S-palmitoyl cysteine. A run of 2 helical transmembrane segments spans residues Ile-270–Thr-288 and Tyr-304–Val-325. The Cytoplasmic segment spans residues His-326–Arg-595. Disordered stretches follow at residues Trp-380 to Gly-477 and Gln-497 to Glu-516. Over residues Thr-390–Ser-407 the composition is skewed to low complexity. Composition is skewed to polar residues over residues Ser-450–Asn-472 and Gln-497–Ser-508. The helical transmembrane segment at Ile-596–Leu-614 threads the bilayer.

The protein belongs to the ligand-gated ion channel (TC 1.A.9) family. Acetylcholine receptor (TC 1.A.9.1) subfamily. Alpha-4/CHRNA4 sub-subfamily. In terms of assembly, neuronal AChR is composed of two different types of subunits: alpha and beta. CHRNA4 forms heteropentameric neuronal acetylcholine receptors with CHRNB2 and CHRNB4, as well as CHRNA5 and CHRNB3 as accesory subunits. Found in two major stoichiometric forms, LS (low agonist sensitivity): (CHRNA4)3:(CHRNB2)2 and HS (high agonist sensitivity): (CHRNA4)2:(CHRNB2)3, the two stoichiometric forms differ in their unitary conductance, calcium permeability, ACh sensitivity and potentiation by divalent cation. Cells produce predominantly an (CHRNA4)3:(CHRNB2)2 nAChR. The (CHRNA4)2:(CHRNB2)3 expression is selectively up-regulated by nicotine and has lower single channel conductance and calcium permeability. In the striatum, also forms CHRNA4:CHRNA6:CHRNB2 complexes. Also found in the stoichiometric form: (CHRNA4:CHRNB2)2:CHRNB3.

The protein localises to the synaptic cell membrane. It localises to the cell membrane. It catalyses the reaction Ca(2+)(in) = Ca(2+)(out). The enzyme catalyses K(+)(in) = K(+)(out). It carries out the reaction Na(+)(in) = Na(+)(out). Activated by a myriad of ligands such as acetylcholine, cytisine, nicotine, choline and epibatidine. Channel potentiation by calcium is stoichiometry-selective, CHRNA4:CHRNB2 nACh receptor is achieved by calcium association with topographically distinct sites framed by anionic residues within the CHRNA4 subunit and between the CHRNA4 and CHRNB2 subunits. nAChR activity is inhibited by the antagonist alpha-conotoxins BuIA, PnIA, GID and MII, small disulfide-constrained peptides from cone snails. Functionally, component of neuronal acetylcholine receptors (nAChRs) that function as pentameric, ligand-gated cation channels with high calcium permeability among other activities. nAChRs are excitatory neurotrasnmitter receptors formed by a collection of nAChR subunits known to mediate synaptic transmission in the nervous system and the neuromuscular junction. Each nAchR subunit confers differential attributes to channel properties, including activation, deactivation and desensitization kinetics, pH sensitivity, cation permeability, and binding to allosteric modulators. CHRNA4 forms heteropentameric neuronal acetylcholine receptors with CHRNB2 and CHRNB4, as well as CHRNA5 and CHRNB3 as accesory subunits. Is the most abundant nAChR subtype expressed in the central nervous system. Found in two major stoichiometric forms,(CHRNA4)3:(CHRNB2)2 and (CHRNA4)2:(CHRNB2)3, the two stoichiometric forms differ in their unitary conductance, calcium permeability, ACh sensitivity and potentiation by divalent cation. Involved in the modulation of calcium-dependent signaling pathways, influences the release of neurotransmitters, including dopamine, glutamate and GABA. The protein is Neuronal acetylcholine receptor subunit alpha-4 (CHRNA4) of Gallus gallus (Chicken).